A 227-amino-acid polypeptide reads, in one-letter code: Cytochrome c oxidase subunit 2 (227 aa).

Residues 1–14 (MAYPMQLGFQDATS) are Mitochondrial intermembrane-facing. Residues 15–45 (PIMEELLHFHDHTLMIVFLISSLVLYIISLM) form a helical membrane-spanning segment. Residues 46–59 (LTTKLTHTSTMDAQ) lie on the Mitochondrial matrix side of the membrane. The helical transmembrane segment at 60 to 87 (EVETVWTILPAIILIMIALPSLRILYMM) threads the bilayer. Residues 88–227 (DEINNPSLTV…YFEKWSASML (140 aa)) lie on the Mitochondrial intermembrane side of the membrane. Histidine 161, cysteine 196, glutamate 198, cysteine 200, histidine 204, and methionine 207 together coordinate Cu cation. Glutamate 198 is a binding site for Mg(2+). Tyrosine 218 bears the Phosphotyrosine mark.

Belongs to the cytochrome c oxidase subunit 2 family. Component of the cytochrome c oxidase (complex IV, CIV), a multisubunit enzyme composed of 14 subunits. The complex is composed of a catalytic core of 3 subunits MT-CO1, MT-CO2 and MT-CO3, encoded in the mitochondrial DNA, and 11 supernumerary subunits COX4I, COX5A, COX5B, COX6A, COX6B, COX6C, COX7A, COX7B, COX7C, COX8 and NDUFA4, which are encoded in the nuclear genome. The complex exists as a monomer or a dimer and forms supercomplexes (SCs) in the inner mitochondrial membrane with NADH-ubiquinone oxidoreductase (complex I, CI) and ubiquinol-cytochrome c oxidoreductase (cytochrome b-c1 complex, complex III, CIII), resulting in different assemblies (supercomplex SCI(1)III(2)IV(1) and megacomplex MCI(2)III(2)IV(2)). Found in a complex with TMEM177, COA6, COX18, COX20, SCO1 and SCO2. Interacts with TMEM177 in a COX20-dependent manner. Interacts with COX20. Interacts with COX16. Requires Cu cation as cofactor.

It localises to the mitochondrion inner membrane. The catalysed reaction is 4 Fe(II)-[cytochrome c] + O2 + 8 H(+)(in) = 4 Fe(III)-[cytochrome c] + 2 H2O + 4 H(+)(out). Component of the cytochrome c oxidase, the last enzyme in the mitochondrial electron transport chain which drives oxidative phosphorylation. The respiratory chain contains 3 multisubunit complexes succinate dehydrogenase (complex II, CII), ubiquinol-cytochrome c oxidoreductase (cytochrome b-c1 complex, complex III, CIII) and cytochrome c oxidase (complex IV, CIV), that cooperate to transfer electrons derived from NADH and succinate to molecular oxygen, creating an electrochemical gradient over the inner membrane that drives transmembrane transport and the ATP synthase. Cytochrome c oxidase is the component of the respiratory chain that catalyzes the reduction of oxygen to water. Electrons originating from reduced cytochrome c in the intermembrane space (IMS) are transferred via the dinuclear copper A center (CU(A)) of subunit 2 and heme A of subunit 1 to the active site in subunit 1, a binuclear center (BNC) formed by heme A3 and copper B (CU(B)). The BNC reduces molecular oxygen to 2 water molecules using 4 electrons from cytochrome c in the IMS and 4 protons from the mitochondrial matrix. The polypeptide is Cytochrome c oxidase subunit 2 (MT-CO2) (Capra hircus (Goat)).